The primary structure comprises 172 residues: MKRDKKEQVVQEVAEKIGRSQGIYLTEYQGLNVAKMAELRNEFRKAGIEYKVVKNTLVKQALLQLAQADKLADGLKSTTAVAFGYDDPIAPAKIIRKFSKTNEALKFKMAAIDGIVYGDDKLVMLSEMLSKTENIGRTAGLINNVVSSVPMVVNAVMRNLVSVLDQVAKQKQ.

Belongs to the universal ribosomal protein uL10 family. Part of the ribosomal stalk of the 50S ribosomal subunit. The N-terminus interacts with L11 and the large rRNA to form the base of the stalk. The C-terminus forms an elongated spine to which L12 dimers bind in a sequential fashion forming a multimeric L10(L12)X complex.

Functionally, forms part of the ribosomal stalk, playing a central role in the interaction of the ribosome with GTP-bound translation factors. The protein is Large ribosomal subunit protein uL10 of Chlorobium limicola (strain DSM 245 / NBRC 103803 / 6330).